The primary structure comprises 423 residues: Probable sodium/metabolite cotransporter BASS3, chloroplastic (423 aa).

The N-terminal 45 residues, 1-45, are a transit peptide targeting the chloroplast; that stretch reads MAAAVAASSSSSSSSCAAVGVATASHPHRHRQARFVVSPPAPASP. The next 9 helical transmembrane spans lie at 106–126, 138–158, 165–187, 192–214, 231–251, 254–274, 287–307, 318–338, and 380–400; these read ALLP…PATF, LGGI…ALAF, TIGY…RAFG, FFAG…ASFL, ISSV…VVPV, IAMA…GLLL, PVMP…PLAI, FLLL…GYWI, and VPAA…ASYW.

It belongs to the bile acid:sodium symporter (BASS) (TC 2.A.28) family.

It is found in the membrane. Its subcellular location is the plastid. The protein resides in the chloroplast envelope. In terms of biological role, may function as sodium-coupled metabolite transporter across the chloroplast envelope. This is Probable sodium/metabolite cotransporter BASS3, chloroplastic (BASS3) from Oryza sativa subsp. japonica (Rice).